Here is a 228-residue protein sequence, read N- to C-terminus: Outer membrane protein assembly factor BamE (228 aa).

Positions 1 to 29 are cleaved as a signal peptide; it reads MNPILKGVYSPARLGVVALTLFGILGVTG. The N-palmitoyl cysteine moiety is linked to residue Cys30. A lipid anchor (S-diacylglycerol cysteine) is attached at Cys30. A disordered region spans residues 197–228; it reads DFFGSSKKDPDPQSPQLGPGTLNDVPKPADSK.

This sequence belongs to the BamE family. Part of the Bam complex.

Its subcellular location is the cell outer membrane. Its function is as follows. Part of the outer membrane protein assembly complex, which is involved in assembly and insertion of beta-barrel proteins into the outer membrane. This is Outer membrane protein assembly factor BamE from Polynucleobacter necessarius subsp. necessarius (strain STIR1).